The chain runs to 397 residues: Ethanolaminephosphotransferase 1 (397 aa).

The residue at position 2 (A2) is an N-acetylalanine. A run of 10 helical transmembrane segments spans residues 47–69 (WLAP…LLMA), 84–103 (HVPD…AYTL), 123–145 (LFDH…SIFG), 150–172 (GVSV…LSHW), 179–201 (ILFL…IVTA), 221–243 (LFTA…LNFF), 256–278 (VYEA…AWIL), 291–310 (VFYF…LIVC), 317–339 (CPTL…LGVA), and 344–366 (SILL…VRVV). Residue U387 is a non-standard amino acid, selenocysteine.

This sequence belongs to the CDP-alcohol phosphatidyltransferase class-I family. Mg(2+) serves as cofactor. Mn(2+) is required as a cofactor. Widely expressed. Abundant in brain, placenta, liver and pancreas, followed by heart, skeletal muscle, lung and kidney. In brain it is strongly expressed in cerebellum, followed by the occipital pole and the frontal lobe.

The protein localises to the endoplasmic reticulum membrane. It catalyses the reaction CDP-ethanolamine + a 1,2-diacyl-sn-glycerol = a 1,2-diacyl-sn-glycero-3-phosphoethanolamine + CMP + H(+). The catalysed reaction is 1-O-alkyl-2-acyl-sn-glycerol + CDP-ethanolamine = a 1-O-alkyl-2-acyl-sn-glycero-3-phosphoethanolamine + CMP + H(+). It participates in phospholipid metabolism; phosphatidylethanolamine biosynthesis; phosphatidylethanolamine from ethanolamine: step 3/3. In terms of biological role, ethanolaminephosphotransferase that catalyzes the transfer of phosphoethanolamine (PE) from CDP-ethanolamine to lipid acceptors, the final step in the synthesis of PE via the 'Kennedy' pathway. PE is the second most abundant phospholipid of membranes in mammals and is involved in various membrane-related cellular processes. The enzyme is critical for the synthesis of several PE species and also catalyzes the synthesis of plasmanyl-PE, a lipid required for proper myelination and neurodevelopment, from 1-alkyl-2-acylglycerol. This chain is Ethanolaminephosphotransferase 1, found in Homo sapiens (Human).